The chain runs to 320 residues: Olfactory receptor 2T12 (320 aa).

Topologically, residues 1–23 (MEMRNTTPDFILLGLFNHTRAHQ) are extracellular. Asn-17 is a glycosylation site (N-linked (GlcNAc...) asparagine). The helical transmembrane segment at 24–47 (VLFMMLLATVLTSLFSNALMILLI) threads the bilayer. Topologically, residues 48 to 55 (HWDHRLHR) are cytoplasmic. Residues 56 to 77 (PMYFLLSQLSLMDMMLVSTTVP) form a helical membrane-spanning segment. Topologically, residues 78–98 (KMAADYLTGNKAISRAGCGVQ) are extracellular. Cys-95 and Cys-187 are joined by a disulfide. Residues 99-118 (IFFLPTLGGGECFLLAAMAY) traverse the membrane as a helical segment. Residues 119 to 137 (DRYAAVCHPLRYPTLMSWQ) lie on the Cytoplasmic side of the membrane. Residues 138–156 (LCLRMTMSSWLLGAADGLL) traverse the membrane as a helical segment. At 157-193 (QAVATLSFPYCGAHEIDHFFCEAPVLVRLACADTSVF) the chain is on the extracellular side. A helical membrane pass occupies residues 194 to 217 (ENAMYICCVLMLLVPFSLILSSYG). The Cytoplasmic portion of the chain corresponds to 218–234 (LILAAVLLMRSTEARKK). The helical transmembrane segment at 235–257 (AFATCSSHVAVVGLFYGAGIFTY) threads the bilayer. Residues 258–270 (MRPKSHRSTNHDK) lie on the Extracellular side of the membrane. Residues 271-290 (VVSAFYTMFTPLLNPLIYSV) form a helical membrane-spanning segment. Residues 291–320 (RNSEVKEALKRWLGTCVNLKHQQNEAHRSR) are Cytoplasmic-facing.

This sequence belongs to the G-protein coupled receptor 1 family.

It is found in the cell membrane. Its function is as follows. Odorant receptor. This chain is Olfactory receptor 2T12 (OR2T12), found in Homo sapiens (Human).